The chain runs to 274 residues: MTMQDKEPSAPACRVIVITSGKGGVGKTTATANLGMCIARLGYRVALIDADIGLRNLDLLLGLENRVVYTAMEVIEGQCRLEQALIRDKRWKNLSMLAMSKNRQRYNMTRKNMMMIVDSIKERGYQYILIDCPAGIDAGFVNAIAPADEAILVTTPEITAIRDADRVAGLLEANDFYNVRLVANRVRPEMIQQNDMMSVDDVQGMIGVPLLGAIPEDKNVIISTNRGEPLVCQKTITLAGVAFEEAARRLVGLPSPSDSAPSRGWFAAIRRLWS.

22 to 29 is an ATP binding site; sequence KGGVGKTT.

It belongs to the ParA family. MinD subfamily.

It localises to the plastid. It is found in the chloroplast. Its function is as follows. ATPase required for the correct placement of the division site. The sequence is that of Putative septum site-determining protein MinD (minD-A) from Nephroselmis olivacea (Green alga).